We begin with the raw amino-acid sequence, 715 residues long: Tensin-4 (715 aa).

The first 18 residues, 1–18, serve as a signal peptide directing secretion; sequence MSQVMSSPLLAGGHAVSL. Phosphoserine is present on serine 82. 4 disordered regions span residues 159–183, 195–251, 291–364, and 376–435; these read RCHD…RSGG, RSSS…SPLV, SLLH…CPPS, and LING…ARDM. Polar residues predominate over residues 197–206; it reads SSESLIFSGN. Residue serine 248 is modified to Phosphoserine. A compositionally biased stretch (low complexity) spans 291-325; sequence SLLHSSNSSHQSSSRSLESPANSSSSLHSLGSVSL. The SH2 domain maps to 449-556; sequence WFKPNITREQ…ALPCKLTIPQ (108 aa). Positions 582–705 constitute a PTB domain; that stretch reads CHTLYLSSVS…QPASQVIGLV (124 aa).

This sequence belongs to the PTEN phosphatase protein family. Interacts (via SH2 domain) with Rho GTPase-activating protein DLC1 (via C-terminus); the interaction is independent of DLC1 tyrosine phosphorylation. Interacts with integrin ITGB1; the interaction displaces tensin TNS3 from the ITGB1 cytoplasmic tail and promotes ITGB1 stability. Interacts (via SH2 domain) with E3 ubiquitin-protein ligase CBL (phosphorylated on 'Tyr-774'); the interaction is enhanced in the presence of EGF and reduces interaction of CBL with EGFR. Interacts (via SH2 domain) with receptor tyrosine kinase MET (when phosphorylated); the interaction increases MET protein stability. In terms of processing, proteolytically cleaved by caspase-3 during apoptosis. As to expression, expressed at low levels in colon (at protein level). Expressed in prostate and placenta.

The protein resides in the cell junction. Its subcellular location is the focal adhesion. The protein localises to the cytoplasm. It localises to the cytoskeleton. In terms of biological role, promotes EGF-induced cell migration by displacing tensin TNS3 from the cytoplasmic tail of integrin ITGB1 which results in dissociation of TNS3 from focal adhesions, disassembly of actin stress fibers and initiation of cell migration. Suppresses ligand-induced degradation of EGFR by reducing EGFR ubiquitination in the presence of EGF. Increases MET protein stability by inhibiting MET endocytosis and subsequent lysosomal degradation which leads to increased cell survival, proliferation and migration. This is Tensin-4 (TNS4) from Homo sapiens (Human).